The sequence spans 85 residues: MFQQEVTITAPNGLHTRPAAQFVKEAKGFTSEITVTSNGKSASAKSLFKLQTLGLTQGTVVTLSAEGEDEQKAVEHLVKLMAELE.

One can recognise an HPr domain in the interval 1–85; it reads MFQQEVTITA…HLVKLMAELE (85 aa). Histidine 15 acts as the Pros-phosphohistidine intermediate in catalysis.

The protein localises to the cytoplasm. General (non sugar-specific) component of the phosphoenolpyruvate-dependent sugar phosphotransferase system (sugar PTS). This major carbohydrate active-transport system catalyzes the phosphorylation of incoming sugar substrates concomitantly with their translocation across the cell membrane. The phosphoryl group from phosphoenolpyruvate (PEP) is transferred to the phosphoryl carrier protein HPr by enzyme I. Phospho-HPr then transfers it to the PTS EIIA domain. The polypeptide is Phosphocarrier protein HPr (ptsH) (Klebsiella pneumoniae).